We begin with the raw amino-acid sequence, 557 residues long: Transmembrane protein 209 (557 aa).

A helical membrane pass occupies residues 28-48 (VVLAWGLLNVSLAGMIYTEMT). A glycan (N-linked (GlcNAc...) asparagine) is linked at Asn57. A helical transmembrane segment spans residues 60 to 80 (YWPLWYIELALASLFSLNALF). Disordered regions lie at residues 108–156 (PYSS…KFSP) and 194–232 (YSSSPGSSQYPSNLGPVEGGLRSRYRSSPSTYSSPTDKE). Positions 125–140 (VPASTPSPSMQGQNVL) are enriched in polar residues. 3 stretches are compositionally biased toward low complexity: residues 141–156 (SYSPSRSPSSSPKFSP), 194–205 (YSSSPGSSQYPS), and 219–228 (RSSPSTYSSP). Asn273 and Asn343 each carry an N-linked (GlcNAc...) asparagine glycan.

Its subcellular location is the membrane. The protein resides in the nucleus envelope. The protein localises to the golgi apparatus. It is found in the cytoplasm. The sequence is that of Transmembrane protein 209 (tmem209) from Xenopus tropicalis (Western clawed frog).